Reading from the N-terminus, the 73-residue chain is Large ribosomal subunit protein bL31 (73 aa).

Zn(2+) is bound by residues Cys16, Cys18, Cys36, and Cys39.

This sequence belongs to the bacterial ribosomal protein bL31 family. Type A subfamily. Part of the 50S ribosomal subunit. The cofactor is Zn(2+).

In terms of biological role, binds the 23S rRNA. This Myxococcus xanthus (strain DK1622) protein is Large ribosomal subunit protein bL31.